Reading from the N-terminus, the 2531-residue chain is MPRLLAPLLCLTLLPALAARGLRCSQPSGTCLNGGRCEVANGTEACVCSGAFVGQRCQDPSPCLSTPCKNAGTCYVVDHGGIVDYACSCPLGFSGPLCLTPLANACLANPCRNGGTCDLLTLTEYKCRCPPGWSGKSCQQADPCASNPCANGGQCLPFESSYICGCPPGFHGPTCRQDVNECSQNPGLCRHGGTCHNEIGSYRCACRATHTGPHCELPYVPCSPSPCQNGGTCRPTGDTTHECACLPGFAGQNCEENVDDCPGNNCKNGGACVDGVNTYNCRCPPEWTGQYCTEDVDECQLMPNACQNGGTCHNSHGGYNCVCVNGWTGEDCSENIDDCASAACFQGATCHDRVASFYCECPHGRTGLLCHLNDACISNPCNEGSNCDTNPVNGKAICTCPSGYTGPACSQDVDECALGANPCEHAGKCLNTLGSFECQCLQGYTGPRCEIDVNECISNPCQNDATCLDQIGEFQCICMPGYEGVYCEINTDECASSPCLHNGRCVDKINEFLCQCPKGFSGHLCQYDVDECASTPCKNGAKCLDGPNTYTCVCTEGYTGTHCEVDIDECDPDPCHYGLCKDGVATFTCLCQPGYTGHHCETNINECHSQPCRHGGTCQDRDNYYLCLCLKGTTGPNCEINLDDCASNPCDSGTCLDKIDGYECACEPGYTGSMCNVNIDECAGSPCHNGGTCEDGIAGFTCRCPEGYHDPTCLSEVNECNSNPCIHGACRDGLNGYKCDCAPGWSGTNCDINNNECESNPCVNGGTCKDMTSGYVCTCREGFSGPNCQTNINECASNPCLNQGTCIDDVAGYKCNCPLPYTGATCEVVLAPCATSPCKNSGVCKESEDYESFSCVCPTGWQGQTCEIDINECVKSPCRHGASCQNTNGSYRCLCQAGYTGRNCESDIDDCRPNPCHNGGSCTDGVNAAFCDCLPGFQGAFCEEDINECASNPCQNGANCTDCVDSYTCTCPTGFNGIHCENNTPDCTESSCFNGGTCVDGINSFTCLCPPGFTGSYCQYDVNECDSRPCLHGGTCQDSYGTYKCTCPQGYTGLNCQNLVRWCDSAPCKNGGKCWQTNTQYHCECRSGWTGFNCDVLSVSCEVAAQKRGIDVTLLCQHGGLCVDEEDKHYCHCQAGYTGSYCEDEVDECSPNPCQNGATCTDYLGGFSCKCVAGYHGSNCSEEINECLSQPCQNGGTCIDLTNTYKCSCPRGTQGVHCEINVDDCHPPLDPASRSPKCFNNGTCVDQVGGYTCTCPPGFVGERCEGDVNECLSNPCDPRGTQNCVQRVNDFHCECRAGHTGRRCESVINGCRGKPCRNGGVCAVASNTARGFICRCPAGFEGATCENDARTCGSLRCLNGGTCISGPRSPTCLCLGSFTGPECQFPASSPCVGSNPCYNQGTCEPTSESPFYRCLCPAKFNGLLCHILDYSFTGGAGRDIPPPQIEEACELPECQEDAGNKVCNLQCNNHACGWDGGDCSLNFNDPWKNCTQSLQCWKYFSDGHCDSQCNSAGCLFDGFDCQLTEGQCNPLYDQYCKDHFSDGHCDQGCNSAECEWDGLDCAEHVPERLAAGTLVLVVLLPPDQLRNNSFHFLRELSHVLHTNVVFKRDAQGQQMIFPYYGREEELRKHPIKRSAVGWATTSLLPGTNGGRQRRELDPMDIHGSIVYLEIDNRQCVQSSSQCFQSATDVAAFLGALASLGSLNIPYKIEAVKSETVEPPLPSQLHLMYVAAAAFVLLFFVGCGVLLSRKRRRQHGQLWFPEGFKVSEASKKKRREPLGEDSVGLKPLKNASDGALMDDNQNEWGDEDLETKKFRFEEPVVLPDLDDQTDHRQWTQQHLDAADLRVSAMAPTPPQGEVDADCMDVNVRGPDGFTPLMIASCSGGGLETGNSEEEEDAPAVISDFIYQGASLHNQTDRTGETALHLAARYSRSDAAKRLLEASADANIQDNMGRTPLHAAVSADAQGVFQILLRNRATDLDARMHDGTTPLILAARLAVEGMLEDLINSHADVNAVDDLGKSALHWAAAVNNVDAAVVLLKNGANKDMQNNKEETPLFLAAREGSYETAKVLLDHFANRDITDHMDRLPRDIAQERMHHDIVRLLDEYNLVRSPQLHGTALGGTPTLSPTLCSPNGYLGNLKSATQGKKARKPSTKGLACSSKEAKDLKARRKKSQDGKGCLLDSSSMLSPVDSLESPHGYLSDVASPPLLPSPFQQSPSMPLSHLPGMPDTHLGISHLNVAAKPEMAALAGGSRLAFEPPPPRLSHLPVASSASTVLSTNGTGAMNFTVGAPASLNGQCEWLPRLQNGMVPSQYNPLRPGVTPGTLSTQAAGLQHGMMGPIHSSLSTNTLSPIIYQGLPNTRLATQPHLVQTQQVQPQNLQIQPQNLQPPSQPHLSVSSAANGHLGRSFLSGEPSQADVQPLGPSSLPVHTILPQESQALPTSLPSSMVPPMTTTQFLTPPSQHSYSSSPVDNTPSHQLQVPEHPFLTPSPESPDQWSSSSPHSNISDWSEGISSPPTSMPSQITHIPEAFK.

Residues 1-18 (MPRLLAPLLCLTLLPALA) form the signal peptide. Topologically, residues 19 to 1725 (ARGLRCSQPS…VEPPLPSQLH (1707 aa)) are extracellular. EGF-like domains are found at residues 20–58 (RGLRCSQPSGTCLNGGRCEVANGTEACVCSGAFVGQRCQ), 59–99 (DPSP…PLCL), 102–139 (LANACLANPCRNGGTCDLLTLTEYKCRCPPGWSGKSCQ), and 140–176 (QADPCASNPCANGGQCLPFESSYICGCPPGFHGPTCR). Disulfide bonds link cysteine 24/cysteine 37, cysteine 31/cysteine 46, cysteine 48/cysteine 57, cysteine 63/cysteine 74, cysteine 68/cysteine 87, cysteine 89/cysteine 98, cysteine 106/cysteine 117, cysteine 111/cysteine 127, cysteine 129/cysteine 138, cysteine 144/cysteine 155, cysteine 149/cysteine 164, cysteine 166/cysteine 175, cysteine 182/cysteine 195, cysteine 189/cysteine 204, cysteine 206/cysteine 215, cysteine 222/cysteine 233, cysteine 227/cysteine 243, cysteine 245/cysteine 254, cysteine 261/cysteine 272, cysteine 266/cysteine 281, cysteine 283/cysteine 292, cysteine 299/cysteine 312, cysteine 306/cysteine 321, cysteine 323/cysteine 332, cysteine 339/cysteine 350, cysteine 344/cysteine 359, cysteine 361/cysteine 370, cysteine 376/cysteine 387, cysteine 381/cysteine 398, cysteine 400/cysteine 409, cysteine 416/cysteine 429, cysteine 423/cysteine 438, and cysteine 440/cysteine 449. N-linked (GlcNAc...) asparagine glycosylation is present at asparagine 41. O-linked (Glc...) serine glycosylation occurs at serine 65. Threonine 73 carries an O-linked (Fuc...) threonine glycan. Threonine 116 carries O-linked (Fuc...) threonine glycosylation. Serine 146 is a glycosylation site (O-linked (Glc...) serine). In terms of domain architecture, EGF-like 5; calcium-binding spans 178-216 (DVNECSQNPGLCRHGGTCHNEIGSYRCACRATHTGPHCE). O-linked (Fuc...) threonine glycosylation occurs at threonine 194. An EGF-like 6 domain is found at 218-255 (PYVPCSPSPCQNGGTCRPTGDTTHECACLPGFAGQNCE). Residue threonine 232 is glycosylated (O-linked (Fuc...) threonine; alternate). Threonine 232 is a glycosylation site (O-linked (GalNAc...) threonine; alternate). One can recognise an EGF-like 7; calcium-binding domain in the interval 257–293 (NVDDCPGNNCKNGGACVDGVNTYNCRCPPEWTGQYCT). The 39-residue stretch at 295-333 (DVDECQLMPNACQNGGTCHNSHGGYNCVCVNGWTGEDCS) folds into the EGF-like 8; calcium-binding domain. Residue threonine 311 is glycosylated (O-linked (Fuc...) threonine). In terms of domain architecture, EGF-like 9; calcium-binding spans 335 to 371 (NIDDCASAACFQGATCHDRVASFYCECPHGRTGLLCH). Serine 341 carries an O-linked (Glc...) serine glycan. The O-linked (Fuc...) threonine glycan is linked to threonine 349. The 39-residue stretch at 372 to 410 (LNDACISNPCNEGSNCDTNPVNGKAICTCPSGYTGPACS) folds into the EGF-like 10 domain. O-linked (Glc...) serine glycosylation occurs at serine 378. An EGF-like 11; calcium-binding domain is found at 412-450 (DVDECALGANPCEHAGKCLNTLGSFECQCLQGYTGPRCE). The interaction with DLL4 stretch occupies residues 420–421 (AN). Ca(2+) contacts are provided by threonine 432 and serine 435. A glycan (O-linked (Glc...) serine) is linked at serine 435. Residues 448-452 (RCEID) form an interaction with DLL4 region. Positions 452, 453, and 455 each coordinate Ca(2+). Residues 452–488 (DVNECISNPCQNDATCLDQIGEFQCICMPGYEGVYCE) form the EGF-like 12; calcium-binding domain. Cystine bridges form between cysteine 456–cysteine 467, cysteine 461–cysteine 476, and cysteine 478–cysteine 487. Serine 458 is a glycosylation site (O-linked (Glc...) serine). An O-linked (Fuc...) threonine glycan is attached at threonine 466. Residues aspartate 469 and glutamine 470 each contribute to the Ca(2+) site. Residues asparagine 490, threonine 491, and glutamate 493 each coordinate Ca(2+). The EGF-like 13; calcium-binding domain maps to 490 to 526 (NTDECASSPCLHNGRCVDKINEFLCQCPKGFSGHLCQ). 75 disulfide bridges follow: cysteine 494/cysteine 505, cysteine 499/cysteine 514, cysteine 516/cysteine 525, cysteine 532/cysteine 543, cysteine 537/cysteine 552, cysteine 554/cysteine 563, cysteine 570/cysteine 580, cysteine 575/cysteine 589, cysteine 591/cysteine 600, cysteine 607/cysteine 618, cysteine 612/cysteine 627, cysteine 629/cysteine 638, cysteine 645/cysteine 655, cysteine 650/cysteine 664, cysteine 666/cysteine 675, cysteine 682/cysteine 693, cysteine 687/cysteine 702, cysteine 704/cysteine 713, cysteine 720/cysteine 730, cysteine 725/cysteine 739, cysteine 741/cysteine 750, cysteine 757/cysteine 768, cysteine 762/cysteine 777, cysteine 779/cysteine 788, cysteine 795/cysteine 806, cysteine 800/cysteine 815, cysteine 817/cysteine 826, cysteine 833/cysteine 844, cysteine 838/cysteine 855, cysteine 857/cysteine 866, cysteine 873/cysteine 884, cysteine 878/cysteine 893, cysteine 895/cysteine 904, cysteine 911/cysteine 922, cysteine 916/cysteine 931, cysteine 933/cysteine 942, cysteine 949/cysteine 960, cysteine 954/cysteine 969, cysteine 971/cysteine 980, cysteine 987/cysteine 998, cysteine 992/cysteine 1007, cysteine 1009/cysteine 1018, cysteine 1025/cysteine 1036, cysteine 1030/cysteine 1045, cysteine 1047/cysteine 1056, cysteine 1063/cysteine 1074, cysteine 1068/cysteine 1083, cysteine 1085/cysteine 1094, cysteine 1101/cysteine 1122, cysteine 1116/cysteine 1131, cysteine 1133/cysteine 1142, cysteine 1149/cysteine 1160, cysteine 1154/cysteine 1169, cysteine 1171/cysteine 1180, cysteine 1187/cysteine 1198, cysteine 1192/cysteine 1207, cysteine 1209/cysteine 1218, cysteine 1225/cysteine 1244, cysteine 1238/cysteine 1253, cysteine 1255/cysteine 1264, cysteine 1271/cysteine 1284, cysteine 1276/cysteine 1293, cysteine 1295/cysteine 1304, cysteine 1311/cysteine 1322, cysteine 1316/cysteine 1334, cysteine 1336/cysteine 1345, cysteine 1352/cysteine 1363, cysteine 1357/cysteine 1372, cysteine 1374/cysteine 1383, cysteine 1391/cysteine 1403, cysteine 1397/cysteine 1414, cysteine 1416/cysteine 1425, cysteine 1449/cysteine 1472, cysteine 1454/cysteine 1467, and cysteine 1463/cysteine 1479. Residue serine 496 is glycosylated (O-linked (Glc...) serine). The Ca(2+) site is built by aspartate 507 and lysine 508. Residues 528 to 564 (DVDECASTPCKNGAKCLDGPNTYTCVCTEGYTGTHCE) enclose the EGF-like 14; calcium-binding domain. The O-linked (Glc...) serine glycan is linked to serine 534. The 36-residue stretch at 566–601 (DIDECDPDPCHYGLCKDGVATFTCLCQPGYTGHHCE) folds into the EGF-like 15; calcium-binding domain. An EGF-like 16; calcium-binding domain is found at 603–639 (NINECHSQPCRHGGTCQDRDNYYLCLCLKGTTGPNCE). A glycan (O-linked (Glc...) serine) is linked at serine 609. Threonine 617 carries an O-linked (Fuc...) threonine glycan. The region spanning 641 to 676 (NLDDCASNPCDSGTCLDKIDGYECACEPGYTGSMCN) is the EGF-like 17; calcium-binding domain. Serine 647 carries an O-linked (Glc...) serine glycan. The EGF-like 18; calcium-binding domain occupies 678-714 (NIDECAGSPCHNGGTCEDGIAGFTCRCPEGYHDPTCL). The O-linked (Fuc...) threonine glycan is linked to threonine 692. The EGF-like 19; calcium-binding domain occupies 716-751 (EVNECNSNPCIHGACRDGLNGYKCDCAPGWSGTNCD). A glycan (O-linked (Glc...) serine) is linked at serine 722. Residues 753–789 (NNNECESNPCVNGGTCKDMTSGYVCTCREGFSGPNCQ) enclose the EGF-like 20; calcium-binding domain. An O-linked (Glc...) serine glycan is attached at serine 759. The O-linked (Fuc...) threonine glycan is linked to threonine 767. An O-linked (GlcNAc) serine glycan is attached at serine 784. Residues 791 to 827 (NINECASNPCLNQGTCIDDVAGYKCNCPLPYTGATCE) form the EGF-like 21; calcium-binding domain. An O-linked (Glc...) serine glycan is attached at serine 797. Threonine 805 carries an O-linked (Fuc...) threonine glycan. In terms of domain architecture, EGF-like 22 spans 829–867 (VLAPCATSPCKNSGVCKESEDYESFSCVCPTGWQGQTCE). One can recognise an EGF-like 23; calcium-binding domain in the interval 869-905 (DINECVKSPCRHGASCQNTNGSYRCLCQAGYTGRNCE). A glycan (N-linked (GlcNAc...) asparagine) is linked at asparagine 888. The O-linked (GlcNAc) threonine glycan is linked to threonine 900. Positions 907-943 (DIDDCRPNPCHNGGSCTDGVNAAFCDCLPGFQGAFCE) constitute an EGF-like 24 domain. A glycan (O-linked (Fuc) serine) is linked at serine 921. Positions 945–981 (DINECASNPCQNGANCTDCVDSYTCTCPTGFNGIHCE) constitute an EGF-like 25; calcium-binding domain. A glycan (O-linked (Glc...) serine) is linked at serine 951. Asparagine 959 carries an N-linked (GlcNAc...) asparagine glycan. The region spanning 983-1019 (NTPDCTESSCFNGGTCVDGINSFTCLCPPGFTGSYCQ) is the EGF-like 26 domain. O-linked (Fuc...) threonine glycosylation occurs at threonine 997. The 37-residue stretch at 1021–1057 (DVNECDSRPCLHGGTCQDSYGTYKCTCPQGYTGLNCQ) folds into the EGF-like 27; calcium-binding domain. Serine 1027 is a glycosylation site (O-linked (Glc...) serine). The O-linked (Fuc...) threonine glycan is linked to threonine 1035. 2 consecutive EGF-like domains span residues 1059-1095 (LVRWCDSAPCKNGGKCWQTNTQYHCECRSGWTGFNCD) and 1097-1143 (LSVS…SYCE). The O-linked (Glc...) serine glycan is linked to serine 1065. The EGF-like 30; calcium-binding domain maps to 1145–1181 (EVDECSPNPCQNGATCTDYLGGFSCKCVAGYHGSNCS). Residue threonine 1159 is glycosylated (O-linked (Fuc...) threonine). Asparagine 1179 carries an N-linked (GlcNAc...) asparagine glycan. The EGF-like 31; calcium-binding domain maps to 1183-1219 (EINECLSQPCQNGGTCIDLTNTYKCSCPRGTQGVHCE). A glycan (O-linked (Glc...) serine) is linked at serine 1189. O-linked (Fuc...) threonine glycosylation occurs at threonine 1197. An EGF-like 32; calcium-binding domain is found at 1221 to 1265 (NVDDCHPPLDPASRSPKCFNNGTCVDQVGGYTCTCPPGFVGERCE). Asparagine 1241 carries N-linked (GlcNAc...) asparagine glycosylation. EGF-like domains are found at residues 1267–1305 (DVNECLSNPCDPRGTQNCVQRVNDFHCECRAGHTGRRCE), 1307–1346 (VINGCRGKPCRNGGVCAVASNTARGFICRCPAGFEGATCE), 1348–1384 (DARTCGSLRCLNGGTCISGPRSPTCLCLGSFTGPECQ), and 1387–1426 (ASSPCVGSNPCYNQGTCEPTSESPFYRCLCPAKFNGLLCH). The O-linked (Glc...) serine glycan is linked to serine 1273. A glycan (O-linked (Fuc...) threonine) is linked at threonine 1362. O-linked (GlcNAc...) threonine glycosylation occurs at threonine 1379. A glycan (O-linked (Fuc...) threonine; alternate) is linked at threonine 1402. Residue threonine 1402 is glycosylated (O-linked (GalNAc...) threonine; alternate). LNR repeat units follow at residues 1449–1489 (CELP…PWKN), 1490–1531 (CTQS…CNPL), and 1532–1571 (YDQYCKDHFSDGHCDQGCNSAECEWDGLDCAEHVPERLAA). Positions 1457, 1460, 1475, and 1478 each coordinate Ca(2+). Asparagine 1489 carries an N-linked (GlcNAc...) asparagine glycan. Intrachain disulfides connect cysteine 1490–cysteine 1514, cysteine 1496–cysteine 1509, cysteine 1505–cysteine 1521, cysteine 1536–cysteine 1549, and cysteine 1545–cysteine 1561. Asparagine 1587 carries N-linked (GlcNAc...) asparagine glycosylation. A glycan (O-linked (GalNAc...) threonine) is linked at threonine 1715. The interval 1718–1750 (PPLPSQLHLMYVAAAAFVLLFFVGCGVLLSRKR) is interaction with PSEN1. Residues 1726–1746 (LMYVAAAAFVLLFFVGCGVLL) traverse the membrane as a helical segment. The Cytoplasmic segment spans residues 1747-2531 (SRKRRRQHGQ…QITHIPEAFK (785 aa)). Residue lysine 1749 forms a Glycyl lysine isopeptide (Lys-Gly) (interchain with G-Cter in ubiquitin) linkage. The tract at residues 1770–1798 (KKKRREPLGEDSVGLKPLKNASDGALMDD) is disordered. Threonine 1851 is modified (phosphothreonine). 5 ANK repeats span residues 1917–1946 (TGETALHLAARYSRSDAAKRLLEASADANI), 1950–1980 (MGRTPLHAAVSADAQGVFQILLRNRATDLDA), 1984–2013 (DGTTPLILAARLAVEGMLEDLINSHADVNA), 2017–2046 (LGKSALHWAAAVNNVDAAVVLLKNGANKDM), and 2050–2079 (KEETPLFLAAREGSYETAKVLLDHFANRDI). The tract at residues 1937–1945 (LLEASADAN) is HIF1AN-binding. Residue asparagine 1945 is modified to (3S)-3-hydroxyasparagine; by HIF1AN. The interval 2004–2012 (LINSHADVN) is HIF1AN-binding. The residue at position 2012 (asparagine 2012) is a (3S)-3-hydroxyasparagine; by HIF1AN. 3 disordered regions span residues 2141–2185 (SATQ…DSSS), 2382–2428 (QPQN…SLPV), and 2440–2531 (PTSL…EAFK). Positions 2382–2395 (QPQNLQPPSQPHLS) are enriched in low complexity. A compositionally biased stretch (polar residues) spans 2440 to 2478 (PTSLPSSMVPPMTTTQFLTPPSQHSYSSSPVDNTPSHQL). A compositionally biased stretch (low complexity) spans 2488 to 2503 (PSPESPDQWSSSSPHS). Over residues 2504-2524 (NISDWSEGISSPPTSMPSQIT) the composition is skewed to polar residues.

This sequence belongs to the NOTCH family. In terms of assembly, heterodimer of a C-terminal fragment N(TM) and an N-terminal fragment N(EC) which are probably linked by disulfide bonds. Interacts with DNER, DTX1, DTX2 and RBPJ/RBPSUH. Also interacts with MAML1, MAML2 and MAML3 which act as transcriptional coactivators for NOTCH1. Notch 1 intracellular domain interacts with SNW1; the interaction involves multimerized NOTCH1 NICD and is implicated in a formation of an intermediate preactivation complex which associates with DNA-bound CBF-1/RBPJ. The activated membrane-bound form interacts with AAK1 which promotes NOTCH1 stabilization. Forms a trimeric complex with FBXW7 and SGK1. Interacts with HIF1AN. HIF1AN negatively regulates the function of notch intracellular domain (NICD), accelerating myogenic differentiation. Interacts (via NICD) with SNAI1 (via zinc fingers); the interaction induces SNAI1 degradation via MDM2-mediated ubiquitination and inhibits SNAI1-induced cell invasion. Interacts (via NICD) with MDM2A. Interacts (via NICD) with BCL6; the interaction decreases MAML1 recruitment by NOTCH1 NICD on target genes DNA and inhibits NOTCH1 transactivation activity. Interacts with THBS4. Interacts (via the EGF-like repeat region) with CCN3 (via CTCK domain). Interacts (via EGF-like domains) with DLL4 (via N-terminal DSL and MNNL domains). Interacts with ZMIZ1. Interacts (via NICD domain) with MEGF10 (via the cytoplasmic domain). Interacts with DLL1 and JAG1. Interacts (via NICD domain) with PRAG1. Forms a complex with PRAG1, N1ICD and MAML1, in a MAML1-dependent manner. Interacts (via transmembrane region) with PSEN1; the interaction is direct. Interacts with ZFP64. Post-translationally, synthesized in the endoplasmic reticulum as an inactive form which is proteolytically cleaved by a furin-like convertase in the trans-Golgi network before it reaches the plasma membrane to yield an active, ligand-accessible form. Cleavage results in a C-terminal fragment N(TM) and a N-terminal fragment N(EC). Following ligand binding, it is cleaved by ADAM17 to yield a membrane-associated intermediate fragment called notch extracellular truncation (NEXT). Following endocytosis, this fragment is then cleaved by one of the catalytic subunits of gamma-secretase (PSEN1 or PSEN2) to release a Notch-derived peptide containing the intracellular domain (NICD) from the membrane. In terms of processing, phosphorylated. O-glycosylated on the EGF-like domains. O-glucosylated at Ser-435 by KDELC1 and KDELC2. Contains both O-linked fucose and O-linked glucose in the EGF-like domains 11, 12 and 13, which are interacting with the residues on DLL4. O-linked glycosylation by GALNT11 is involved in determination of left/right symmetry: glycosylation promotes activation of NOTCH1, possibly by promoting cleavage by ADAM17, modulating the balance between motile and immotile (sensory) cilia at the left-right organiser (LRO). MFNG-, RFNG- and LFNG-mediated modification of O-fucose residues at specific EGF-like domains results in inhibition of its activation by JAG1 and enhancement of its activation by DLL1 via an increased binding to DLL1. Post-translationally, ubiquitinated. Undergoes 'Lys-29'-linked polyubiquitination by ITCH; promotes the lysosomal degradation of non-activated internalized NOTCH1. Deubiquitination by USP12 is required for transport of internalized non-activated receptor from late endosomes to lysosomes for degradation. Monoubiquitination at Lys-1749 is required for activation by gamma-secretase cleavage, it promotes interaction with AAK1, which stabilizes it. Deubiquitination by EIF3F is necessary for nuclear import of activated Notch. In terms of processing, hydroxylated at Asn-1945 and Asn-2012 by HIF1AN. Hydroxylation reduces affinity for HI1AN and may thus indirectly modulate negative regulation of NICD. In terms of tissue distribution, expressed in the brain, kidney and spleen. Expressed in postnatal central nervous system (CNS) germinal zones and, in early postnatal life, within numerous cells throughout the CNS. Found in both subventricular and ventricular germinal zones.

It is found in the cell membrane. Its subcellular location is the late endosome membrane. It localises to the nucleus. Functionally, functions as a receptor for membrane-bound ligands Jagged-1 (JAG1), Jagged-2 (JAG2) and Delta-1 (DLL1) to regulate cell-fate determination. Upon ligand activation through the released notch intracellular domain (NICD) it forms a transcriptional activator complex with RBPJ/RBPSUH and activates genes of the enhancer of split locus. Affects the implementation of differentiation, proliferation and apoptotic programs. Involved in angiogenesis; negatively regulates endothelial cell proliferation and migration and angiogenic sprouting. Involved in the maturation of both CD4(+) and CD8(+) cells in the thymus. Important for follicular differentiation and possibly cell fate selection within the follicle. During cerebellar development, functions as a receptor for neuronal DNER and is involved in the differentiation of Bergmann glia. Represses neuronal and myogenic differentiation. May play an essential role in postimplantation development, probably in some aspect of cell specification and/or differentiation. May be involved in mesoderm development, somite formation and neurogenesis. May enhance HIF1A function by sequestering HIF1AN away from HIF1A. Required for the THBS4 function in regulating protective astrogenesis from the subventricular zone (SVZ) niche after injury. Involved in determination of left/right symmetry by modulating the balance between motile and immotile (sensory) cilia at the left-right organiser (LRO). The polypeptide is Neurogenic locus notch homolog protein 1 (Notch1) (Rattus norvegicus (Rat)).